Here is a 187-residue protein sequence, read N- to C-terminus: Guanylate kinase (187 aa).

Residues 5–183 (GRLTVLTGPS…ALKQLETHMQ (179 aa)) enclose the Guanylate kinase-like domain. 12–19 (GPSGVGKG) is an ATP binding site.

The protein belongs to the guanylate kinase family.

The protein resides in the cytoplasm. The enzyme catalyses GMP + ATP = GDP + ADP. It carries out the reaction dZMP + ATP = dZDP + ADP. Its pathway is purine metabolism. Its function is as follows. Essential for recycling GMP and indirectly, cGMP. (Microbial infection) Catalyzes the phosphorylation of dZMP to dZDP, when the bacterium is infected by a phage that produces the substrate for the synthesis of dZTP (2- amino-2'-deoxyadenosine 5'-triphosphate), which is then used by the phage as a DNA polymerase substrate. The polypeptide is Guanylate kinase (Synechococcus sp. (strain CC9902)).